The chain runs to 201 residues: Ribosome maturation factor RimP (201 aa).

This sequence belongs to the RimP family.

It is found in the cytoplasm. Functionally, required for maturation of 30S ribosomal subunits. This is Ribosome maturation factor RimP from Rhizobium leguminosarum bv. trifolii (strain WSM2304).